A 360-amino-acid chain; its full sequence is Peptide chain release factor 1 (360 aa).

At Q235 the chain carries N5-methylglutamine.

Belongs to the prokaryotic/mitochondrial release factor family. Methylated by PrmC. Methylation increases the termination efficiency of RF1.

The protein resides in the cytoplasm. Peptide chain release factor 1 directs the termination of translation in response to the peptide chain termination codons UAG and UAA. The polypeptide is Peptide chain release factor 1 (Mannheimia succiniciproducens (strain KCTC 0769BP / MBEL55E)).